A 161-amino-acid polypeptide reads, in one-letter code: Assembly protein P7 (161 aa).

Homodimer. Part of the packaging complex composed of RDRP, P4 and P7. Interacts with RDRP.

The protein resides in the virion. In terms of biological role, assembly protein part of the packaging complex that packages the viral RNA segments, replicate them into a double-stranded form and transcribe them. Required for efficient procapsid assembly. Necessary for stable packaging. May stabilize the RNA-dependent RNA polymerase (RdRP) in its position at the three-fold axis on the inner side of empty-unexpanded procapsids. Could play a role in viral RNA recognition. Seems to be involved in the regulation of plus strand synthesis (transcription) as a fidelity factor. In Pseudomonas phage phi6 (Bacteriophage phi-6), this protein is Assembly protein P7 (P7).